The primary structure comprises 1235 residues: Major DNA-binding protein (1235 aa).

Positions 536 to 584 (GGLDGKGDDGVPGGGAGGGGGRDVSGGPSDGLGGGRGGGGGGDSGGMMG) are disordered. The segment covering 545–584 (GVPGGGAGGGGGRDVSGGPSDGLGGGRGGGGGGDSGGMMG) has biased composition (gly residues). The Required for filament formation signature appears at 846-847 (FW). Residues 1214 to 1226 (GVGGSSGGGGGSG) show a composition bias toward gly residues. Residues 1214–1235 (GVGGSSGGGGGSGLLPAKRSRL) are disordered. Positions 1232–1235 (RSRL) are required for nuclear localization.

It belongs to the herpesviridae major DNA-binding protein family. In terms of assembly, homooligomers. Forms double-helical filaments necessary for the formation of replication compartments within the host nucleus. Interacts with the origin-binding protein. Interacts with the helicase primase complex; this interaction stimulates primer synthesis activity of the helicase-primase complex. Interacts with the DNA polymerase. Interacts with the alkaline exonuclease; this interaction increases its nuclease processivity.

The protein localises to the host nucleus. In terms of biological role, plays several crucial roles in viral infection. Participates in the opening of the viral DNA origin to initiate replication by interacting with the origin-binding protein. May disrupt loops, hairpins and other secondary structures present on ssDNA to reduce and eliminate pausing of viral DNA polymerase at specific sites during elongation. Promotes viral DNA recombination by performing strand-transfer, characterized by the ability to transfer a DNA strand from a linear duplex to a complementary single-stranded DNA circle. Can also catalyze the renaturation of complementary single strands. Additionally, reorganizes the host cell nucleus, leading to the formation of prereplicative sites and replication compartments. This process is driven by the protein which can form double-helical filaments in the absence of DNA. The sequence is that of Major DNA-binding protein from Homo sapiens (Human).